The following is a 279-amino-acid chain: Acetyl-coenzyme A carboxylase carboxyl transferase subunit beta (279 aa).

The CoA carboxyltransferase N-terminal domain maps to 23 to 279 (LWSKCDECGA…LIKLFKHLRG (257 aa)). Zn(2+)-binding residues include Cys-27, Cys-30, Cys-46, and Cys-49. The C4-type zinc finger occupies 27–49 (CDECGAALHKKQLEDHLYTCPEC).

This sequence belongs to the AccD/PCCB family. Acetyl-CoA carboxylase is a heterohexamer composed of biotin carboxyl carrier protein (AccB), biotin carboxylase (AccC) and two subunits each of ACCase subunit alpha (AccA) and ACCase subunit beta (AccD). Zn(2+) serves as cofactor.

Its subcellular location is the cytoplasm. The enzyme catalyses N(6)-carboxybiotinyl-L-lysyl-[protein] + acetyl-CoA = N(6)-biotinyl-L-lysyl-[protein] + malonyl-CoA. It participates in lipid metabolism; malonyl-CoA biosynthesis; malonyl-CoA from acetyl-CoA: step 1/1. Functionally, component of the acetyl coenzyme A carboxylase (ACC) complex. Biotin carboxylase (BC) catalyzes the carboxylation of biotin on its carrier protein (BCCP) and then the CO(2) group is transferred by the transcarboxylase to acetyl-CoA to form malonyl-CoA. This chain is Acetyl-coenzyme A carboxylase carboxyl transferase subunit beta, found in Chlorobaculum parvum (strain DSM 263 / NCIMB 8327) (Chlorobium vibrioforme subsp. thiosulfatophilum).